Here is a 350-residue protein sequence, read N- to C-terminus: Putative D-xylulose reductase (350 aa).

3 residues coordinate Zn(2+): Cys43, His68, and Glu154.

This sequence belongs to the zinc-containing alcohol dehydrogenase family. The cofactor is Zn(2+).

It catalyses the reaction xylitol + NAD(+) = D-xylulose + NADH + H(+). In Agrobacterium fabrum (strain C58 / ATCC 33970) (Agrobacterium tumefaciens (strain C58)), this protein is Putative D-xylulose reductase.